The sequence spans 284 residues: ATP synthase subunit a (284 aa).

The next 6 helical transmembrane spans lie at 55 to 75 (AIHVDTLGWSIAMGILFLGLF), 116 to 136 (IAPLALTIFVWILLMNILKLI), 165 to 185 (FGMSIGVFLLILFYSFKVKGV), 196 to 216 (PFNHWIMIPFNLLLEILALII), 234 to 254 (VVFILIALLPLWIQWTLNVPW), and 255 to 275 (AIFHILVIPLQAFIFTVLTVV).

It belongs to the ATPase A chain family. As to quaternary structure, F-type ATPases have 2 components, CF(1) - the catalytic core - and CF(0) - the membrane proton channel. CF(1) has five subunits: alpha(3), beta(3), gamma(1), delta(1), epsilon(1). CF(0) has three main subunits: a(1), b(2) and c(9-12). The alpha and beta chains form an alternating ring which encloses part of the gamma chain. CF(1) is attached to CF(0) by a central stalk formed by the gamma and epsilon chains, while a peripheral stalk is formed by the delta and b chains.

The protein localises to the cell inner membrane. Its function is as follows. Key component of the proton channel; it plays a direct role in the translocation of protons across the membrane. The polypeptide is ATP synthase subunit a (Marinobacter nauticus (strain ATCC 700491 / DSM 11845 / VT8) (Marinobacter aquaeolei)).